We begin with the raw amino-acid sequence, 497 residues long: Glycerol kinase (497 aa).

An ADP-binding site is contributed by Thr12. The ATP site is built by Thr12, Thr13, and Ser14. Residue Thr12 participates in sn-glycerol 3-phosphate binding. Arg16 provides a ligand contact to ADP. 4 residues coordinate sn-glycerol 3-phosphate: Arg82, Glu83, Tyr134, and Asp243. The glycerol site is built by Arg82, Glu83, Tyr134, Asp243, and Gln244. The ADP site is built by Thr265 and Gly308. Positions 265, 308, 312, and 409 each coordinate ATP. 2 residues coordinate ADP: Gly409 and Asn413.

This sequence belongs to the FGGY kinase family. Homotetramer and homodimer (in equilibrium).

The enzyme catalyses glycerol + ATP = sn-glycerol 3-phosphate + ADP + H(+). Its pathway is polyol metabolism; glycerol degradation via glycerol kinase pathway; sn-glycerol 3-phosphate from glycerol: step 1/1. Its activity is regulated as follows. Activated by phosphorylation and inhibited by fructose 1,6-bisphosphate (FBP). Key enzyme in the regulation of glycerol uptake and metabolism. Catalyzes the phosphorylation of glycerol to yield sn-glycerol 3-phosphate. This is Glycerol kinase from Thermoanaerobacter sp. (strain X514).